The chain runs to 507 residues: Myocyte-specific enhancer factor 2D (507 aa).

Residues Arg3–Tyr57 enclose the MADS-box domain. The segment at residues Ala58 to Glu86 is a DNA-binding region (mef2-type). Ser98, Ser106, Ser110, Ser121, and Ser180 each carry phosphoserine. The interval Thr174–Gly207 is disordered. Polar residues predominate over residues Ser180–Ser192. Residue Ser190 is modified to Phosphoserine; by PKA. Ser231 is subject to Phosphoserine. Disordered stretches follow at residues Asn244–Lys267, Trp357–His392, and Ser423–Lys507. The residue at position 245 (Lys245) is an N6-acetyllysine. The residue at position 251 (Ser251) is a Phosphoserine. Residues Pro363–Gln389 are compositionally biased toward pro residues. Lys425 carries the N6-acetyllysine; alternate modification. Residue Lys425 forms a Glycyl lysine isopeptide (Lys-Gly) (interchain with G-Cter in SUMO); alternate linkage. Ser430 carries the phosphoserine modification.

As to quaternary structure, forms a complex with class II HDACs in undifferentiating cells. On myogenic differentiation, HDACs are released into the cytoplasm allowing MEF2s to interact with other proteins for activation. Interacts with HDAC4 (in undifferentiating cells); the interaction translocates MEF2D to nuclear dots. Forms a heterodimer with MEF2A. Interacts with MAPK7; the interaction phosphorylates but does not activate MEF2D. Interacts with MYOG. Interacts with CCAR2 and HDAC3. In terms of processing, phosphorylated on Ser-430 by CDK5 is required for Lys-425 sumoylation and inhibits transcriptional activity. In neurons, enhanced CDK5 activity induced by neurotoxins promotes caspase 3-mediated cleavage leading to neuron apoptosis. Phosphorylation on Ser-180 can be enhanced by EGF. Phosphorylated and activated by CaMK4. Acetylated on Lys-425 by CREBBP. Acetylated by EP300. Deacetylated by SIRT1 and HDAC3. Post-translationally, sumoylated on Lys-425 with SUMO2 but not SUMO1; which inhibits transcriptional activity and myogenic activity. Desumoylated by SENP3.

The protein localises to the nucleus. In terms of biological role, transcriptional activator which binds specifically to the MEF2 element, 5'-YTA[AT](4)TAR-3', found in numerous muscle-specific, growth factor- and stress-induced genes. Mediates cellular functions not only in skeletal and cardiac muscle development, but also in neuronal differentiation and survival. Plays diverse roles in the control of cell growth, survival and apoptosis via p38 MAPK signaling in muscle-specific and/or growth factor-related transcription. Plays a critical role in the regulation of neuronal apoptosis. The protein is Myocyte-specific enhancer factor 2D (Mef2d) of Rattus norvegicus (Rat).